A 221-amino-acid chain; its full sequence is Oxaloacetate tautomerase FAHD1, mitochondrial (221 aa).

The N-terminal 24 residues, 1–24 (MASTKPLSRFWEWGKNIVCVGRNY), are a transit peptide targeting the mitochondrion. Serine 37 is modified (phosphoserine). Mg(2+)-binding residues include glutamate 68, glutamate 70, and aspartate 99. Residue lysine 110 is modified to N6-acetyllysine. Position 112 is an N6-succinyllysine (lysine 112).

The protein belongs to the FAH family. As to quaternary structure, homodimer. Mg(2+) serves as cofactor. Requires Mn(2+) as cofactor.

It localises to the mitochondrion. Its subcellular location is the cytoplasm. The protein resides in the cytosol. It catalyses the reaction oxaloacetate = enol-oxaloacetate. The enzyme catalyses oxaloacetate + H(+) = pyruvate + CO2. It carries out the reaction a 3-acylpyruvate + H2O = a carboxylate + pyruvate + H(+). The catalysed reaction is acetylpyruvate + H2O = acetate + pyruvate + H(+). It catalyses the reaction 3-fumarylpyruvate + H2O = fumarate + pyruvate + H(+). Its activity is regulated as follows. Oxaloacetate decarboxylation is competitively inhibited by oxalate. In terms of biological role, tautomerase that converts enol-oxaloacetate, a strong inhibitor of succinate dehydrogenase, to the physiological keto form of oxaloacetate. It is thereby required to maximize aerobic respiration efficiency by preventing succinate dehydrogenase inhibition. Also acts as a weak oxaloacetate decarboxylase (ODx), catalyzing the decarboxylation of oxaloacetate (OAA) to pyruvate and CO(2), and as such is likely a regulatory enzyme in the TCA cycle. Also displays acylpyruvase activity, being able to hydrolyze acetylpyruvate and fumarylpyruvate in vitro. This chain is Oxaloacetate tautomerase FAHD1, mitochondrial, found in Rattus norvegicus (Rat).